The primary structure comprises 381 residues: tRNA pseudouridine synthase D (381 aa).

The active-site Nucleophile is Asp-81. The TRUD domain maps to 160–335 (GMPNYFGSQR…TLGSRRFFWV (176 aa)).

The protein belongs to the pseudouridine synthase TruD family.

The enzyme catalyses uridine(13) in tRNA = pseudouridine(13) in tRNA. Functionally, responsible for synthesis of pseudouridine from uracil-13 in transfer RNAs. In Helicobacter pylori (strain P12), this protein is tRNA pseudouridine synthase D.